Reading from the N-terminus, the 176-residue chain is Dual specificity phosphatase 28 (176 aa).

Residues 17–159 (PPLVRVAPSL…LQKYEEALQA (143 aa)) form the Tyrosine-protein phosphatase domain. Cysteine 103 (phosphocysteine intermediate) is an active-site residue.

Belongs to the protein-tyrosine phosphatase family. Non-receptor class dual specificity subfamily. Monomer.

The catalysed reaction is O-phospho-L-tyrosyl-[protein] + H2O = L-tyrosyl-[protein] + phosphate. It carries out the reaction O-phospho-L-seryl-[protein] + H2O = L-seryl-[protein] + phosphate. The enzyme catalyses O-phospho-L-threonyl-[protein] + H2O = L-threonyl-[protein] + phosphate. Functionally, has phosphatase activity with the synthetic substrate 6,8-difluoro-4-methylumbelliferyl phosphate (in vitro). Has almost no detectable activity with phosphotyrosine, even less activity with phosphothreonine and displays complete lack of activity with phosphoserine. The poor activity with phosphotyrosine may be due to steric hindrance by bulky amino acid sidechains that obstruct access to the active site. The chain is Dual specificity phosphatase 28 (DUSP28) from Homo sapiens (Human).